The sequence spans 628 residues: Translation factor GUF1, mitochondrial (628 aa).

Residues 27–209 (LPSRNFSIIA…AIISRIPPPS (183 aa)) enclose the tr-type G domain. Residues 36–43 (AHIDHGKS), 102–106 (DTPGH), and 156–159 (NKID) each bind GTP.

The protein belongs to the TRAFAC class translation factor GTPase superfamily. Classic translation factor GTPase family. LepA subfamily.

It localises to the mitochondrion inner membrane. The enzyme catalyses GTP + H2O = GDP + phosphate + H(+). Its function is as follows. Promotes mitochondrial protein synthesis. May act as a fidelity factor of the translation reaction, by catalyzing a one-codon backward translocation of tRNAs on improperly translocated ribosomes. Binds to mitochondrial ribosomes in a GTP-dependent manner. This chain is Translation factor GUF1, mitochondrial, found in Laccaria bicolor (strain S238N-H82 / ATCC MYA-4686) (Bicoloured deceiver).